The chain runs to 968 residues: Angiomotin-like protein 1 (968 aa).

2 stretches are compositionally biased toward polar residues: residues 152-164 (VYQSARQEPQGQE) and 177-187 (RSTQPQQNNEE). The disordered stretch occupies residues 152–258 (VYQSARQEPQ…NRANSGQAHK (107 aa)). Positions 203-224 (GQQQQQQQQQQQQQQQQQQGQG) are enriched in low complexity. Phosphoserine is present on residues serine 253, serine 281, and serine 307. A coiled-coil region spans residues 271-291 (RSLSERIMQLSLERNGAKQHL). The disordered stretch occupies residues 285–343 (NGAKQHLPSSGNGKSFKAGGEPSPAQPVCKALDPRGPPPEYPFKTKPMKSPVSKNQDHG). Coiled coils occupy residues 449–645 (VERA…RRLR) and 676–705 (ALMELVREKEERILALEADMTKWEQKYLEE). The interval 721–742 (AERDTTISNHSRNGSYGESSLE) is disordered. The segment covering 726–738 (TISNHSRNGSYGE) has biased composition (polar residues). A Phosphoserine modification is found at serine 731. Residues 748-773 (EEEEVVQANRRCQDMEYTIKNLHAKI) adopt a coiled-coil conformation. The tract at residues 785–834 (QRSRKDAGKTDSASLRPARSVPSIAAATGTHSRQTSLTSSQLTEEKKEEK) is disordered. Phosphoserine occurs at positions 804, 816, and 840. Over residues 853–878 (ASAPLLPTTPASALSLPASTTSASST) the composition is skewed to low complexity. The tract at residues 853–956 (ASAPLLPTTP…GRVSNLLHKP (104 aa)) is disordered. Residues serine 912 and serine 918 each carry the phosphoserine modification. Positions 965 to 968 (EVLI) match the PDZ-binding motif.

Belongs to the angiomotin family. Polyubiquitinated by NEDD4, leading to proteasomal degradation. In terms of tissue distribution, expressed in exocrine glands, including pancreas, submandibular gland, lacrimal gland, parotid gland and sublingual gland (at protein level).

It is found in the cell junction. The protein localises to the tight junction. In terms of biological role, inhibits the Wnt/beta-catenin signaling pathway, probably by recruiting CTNNB1 to recycling endosomes and hence preventing its translocation to the nucleus. The chain is Angiomotin-like protein 1 (Amotl1) from Mus musculus (Mouse).